The following is a 252-amino-acid chain: Ribosomal RNA small subunit methyltransferase J (252 aa).

Residues 101–102 (RD), 117–118 (ER), 153–154 (SS), and Asp-171 contribute to the S-adenosyl-L-methionine site.

This sequence belongs to the methyltransferase superfamily. RsmJ family.

The protein localises to the cytoplasm. The catalysed reaction is guanosine(1516) in 16S rRNA + S-adenosyl-L-methionine = N(2)-methylguanosine(1516) in 16S rRNA + S-adenosyl-L-homocysteine + H(+). In terms of biological role, specifically methylates the guanosine in position 1516 of 16S rRNA. The sequence is that of Ribosomal RNA small subunit methyltransferase J from Salmonella paratyphi B (strain ATCC BAA-1250 / SPB7).